A 93-amino-acid polypeptide reads, in one-letter code: Phosphoribosyl-ATP pyrophosphatase (93 aa).

It belongs to the PRA-PH family.

The protein resides in the cytoplasm. The enzyme catalyses 1-(5-phospho-beta-D-ribosyl)-ATP + H2O = 1-(5-phospho-beta-D-ribosyl)-5'-AMP + diphosphate + H(+). It participates in amino-acid biosynthesis; L-histidine biosynthesis; L-histidine from 5-phospho-alpha-D-ribose 1-diphosphate: step 2/9. In Metallosphaera sedula (strain ATCC 51363 / DSM 5348 / JCM 9185 / NBRC 15509 / TH2), this protein is Phosphoribosyl-ATP pyrophosphatase.